Here is a 1334-residue protein sequence, read N- to C-terminus: Lysine-specific demethylase 3A-B (1334 aa).

Disordered stretches follow at residues 243–288 (DQND…KTSF), 352–382 (PGIQ…SQNL), and 514–533 (KPQE…VTYP). Over residues 267-283 (TEVKQTRNEEVPSKDVT) the composition is skewed to basic and acidic residues. The C6-type zinc finger occupies 684–709 (CDACDTTIFNLHWVCPKCGFGVCVDC). An LXXLL motif motif is present at residues 897 to 901 (LRNLL). Residues 1089 to 1294 (RREGKLNLAA…HCFCLTQEFR (206 aa)) form the JmjC domain. 3 residues coordinate Fe cation: His1133, Asp1135, and His1262.

This sequence belongs to the JHDM2 histone demethylase family. Fe(2+) serves as cofactor.

Its subcellular location is the cytoplasm. The protein resides in the nucleus. The enzyme catalyses N(6),N(6)-dimethyl-L-lysyl(9)-[histone H3] + 2 2-oxoglutarate + 2 O2 = L-lysyl(9)-[histone H3] + 2 formaldehyde + 2 succinate + 2 CO2. Its function is as follows. Histone demethylase that specifically demethylates 'Lys-9' of histone H3, thereby playing a central role in histone code. Preferentially demethylates mono- and dimethylated H3 'Lys-9' residue, with a preference for dimethylated residue, while it has weak or no activity on trimethylated H3 'Lys-9'. Demethylation of Lys residue generates formaldehyde and succinate. This Xenopus laevis (African clawed frog) protein is Lysine-specific demethylase 3A-B (kdm3a-b).